We begin with the raw amino-acid sequence, 378 residues long: Anhydro-N-acetylmuramic acid kinase (378 aa).

Residue 9–16 (GTSVDGID) participates in ATP binding.

The protein belongs to the anhydro-N-acetylmuramic acid kinase family.

It catalyses the reaction 1,6-anhydro-N-acetyl-beta-muramate + ATP + H2O = N-acetyl-D-muramate 6-phosphate + ADP + H(+). It functions in the pathway amino-sugar metabolism; 1,6-anhydro-N-acetylmuramate degradation. Its pathway is cell wall biogenesis; peptidoglycan recycling. Catalyzes the specific phosphorylation of 1,6-anhydro-N-acetylmuramic acid (anhMurNAc) with the simultaneous cleavage of the 1,6-anhydro ring, generating MurNAc-6-P. Is required for the utilization of anhMurNAc either imported from the medium or derived from its own cell wall murein, and thus plays a role in cell wall recycling. In Microcystis aeruginosa (strain NIES-843 / IAM M-2473), this protein is Anhydro-N-acetylmuramic acid kinase.